A 462-amino-acid polypeptide reads, in one-letter code: Nitrogenase iron-iron protein beta chain (462 aa).

[8Fe-7S] cluster-binding residues include Cys20, Cys45, Cys104, and Ser143.

Belongs to the NifD/NifK/NifE/NifN family. As to quaternary structure, hexamer of two alpha, two beta, and two delta chains. [8Fe-7S] cluster serves as cofactor.

It catalyses the reaction N2 + 8 reduced [2Fe-2S]-[ferredoxin] + 16 ATP + 16 H2O = H2 + 8 oxidized [2Fe-2S]-[ferredoxin] + 2 NH4(+) + 16 ADP + 16 phosphate + 6 H(+). Its function is as follows. This iron-iron protein is part of the nitrogenase complex that catalyzes the key enzymatic reactions in nitrogen fixation. Other nitrogenase complexes utilize a molybdenum-iron protein or a vanadium-iron protein. In Azotobacter vinelandii, this protein is Nitrogenase iron-iron protein beta chain (anfK).